We begin with the raw amino-acid sequence, 460 residues long: NADH-quinone oxidoreductase subunit N (460 aa).

The next 13 helical transmembrane spans lie at 2-22 (LLPEITLTLTALLSQFFAVML), 28-48 (IVANITILLTILTIFIILKYS), 65-85 (ANIANYKAIILIFTIISMIIY), 104-124 (ILLSTVGIFVAISAQNFLLLF), 155-175 (FILGSLVSCLSLFGISFIYGF), 196-216 (LGLVIGVVLFLSSIFFKLSSA), 230-250 (PIASVTYFTAASKIGAVAILL), 263-283 (ISYNLIKIIALLSMIFGALGA), 292-312 (LMAYSTILNIGYVLIGVLLRT), 321-341 (LYMLIYAAASIGFFTCLIMLL), 363-383 (IAAAICIIMFSMIGIPPLAGF), 400-420 (LLAYFGIFTSVIAAFYYLKII), and 438-458 (YGLLLINFVVIGFLLFGSFII).

The protein belongs to the complex I subunit 2 family. NDH-1 is composed of 14 different subunits. Subunits NuoA, H, J, K, L, M, N constitute the membrane sector of the complex.

The protein localises to the cell inner membrane. The enzyme catalyses a quinone + NADH + 5 H(+)(in) = a quinol + NAD(+) + 4 H(+)(out). NDH-1 shuttles electrons from NADH, via FMN and iron-sulfur (Fe-S) centers, to quinones in the respiratory chain. The immediate electron acceptor for the enzyme in this species is believed to be ubiquinone. Couples the redox reaction to proton translocation (for every two electrons transferred, four hydrogen ions are translocated across the cytoplasmic membrane), and thus conserves the redox energy in a proton gradient. The protein is NADH-quinone oxidoreductase subunit N of Rickettsia bellii (strain RML369-C).